The following is a 202-amino-acid chain: Protein lin-28 homolog A (202 aa).

Disordered stretches follow at residues 1 to 33 (MPPANPHLNHTGGCTKTEEEEAASSEEDSGSFH) and 100 to 128 (SLQVTGPGGAPCVGSEKKPKGTQKRRSKG). Over residues 18-29 (EEEEAASSEEDS) the composition is skewed to acidic residues. The 74-residue stretch at 33–106 (HGSGVCKWFN…GLESLQVTGP (74 aa)) folds into the CSD domain. Residues 107 to 130 (GGAPCVGSEKKPKGTQKRRSKGDR) are flexible linker. CCHC-type zinc fingers lie at residues 129–146 (DRCFNCGGPNHHAKECQL) and 151–168 (KKCHFCQSISHMVANCPI). Zn(2+) contacts are provided by Cys131, Cys134, His139, Cys144, Cys153, Cys156, His161, and Cys166. The disordered stretch occupies residues 170–202 (AQQLSPGSQGKSTTSTGEEEDMSHTPLLPESTD). Residues 171-185 (QQLSPGSQGKSTTST) are compositionally biased toward polar residues. Ser174 is subject to Phosphoserine.

Belongs to the lin-28 family. As to quaternary structure, monomer.

It is found in the cytoplasm. The protein localises to the rough endoplasmic reticulum. Its subcellular location is the P-body. It localises to the stress granule. The protein resides in the nucleus. It is found in the nucleolus. In terms of biological role, RNA-binding protein that inhibits processing of pre-let-7 miRNAs and regulates translation of mRNAs that control developmental timing, pluripotency and metabolism. Seems to recognize a common structural G-quartet (G4) feature in its miRNA and mRNA targets. 'Translational enhancer' that drives specific mRNAs to polysomes and increases the efficiency of protein synthesis. Its association with the translational machinery and target mRNAs results in an increased number of initiation events per molecule of mRNA and, indirectly, in mRNA stabilization. Suppressor of microRNA (miRNA) biogenesis, including that of let-7. Binds specific target miRNA precursors (pre-miRNAs), recognizing an 5'-GGAG-3' motif found in their terminal loop, and recruits uridylyltransferase. This results in the terminal uridylation of target pre-miRNAs. Uridylated pre-miRNAs fail to be processed by Dicer and undergo degradation. Localized to the periendoplasmic reticulum area, binds to a large number of spliced mRNAs and inhibits the translation of mRNAs destined for the ER, reducing the synthesis of transmembrane proteins, ER or Golgi lumen proteins, and secretory proteins. Binds to and enhances the translation of mRNAs for several metabolic enzymes, increasing glycolysis and oxidative phosphorylation. Which, with the let-7 repression may enhance tissue repair in adult tissue. The chain is Protein lin-28 homolog A (lin28a) from Danio rerio (Zebrafish).